We begin with the raw amino-acid sequence, 310 residues long: tRNA dimethylallyltransferase (310 aa).

10–17 (GPTAVGKS) is an ATP binding site. 12–17 (TAVGKS) is a binding site for substrate. Interaction with substrate tRNA stretches follow at residues 35-38 (DSAQ), 159-163 (QRIQR), and 274-281 (KRQITWLR).

The protein belongs to the IPP transferase family. Monomer. Mg(2+) serves as cofactor.

It carries out the reaction adenosine(37) in tRNA + dimethylallyl diphosphate = N(6)-dimethylallyladenosine(37) in tRNA + diphosphate. Functionally, catalyzes the transfer of a dimethylallyl group onto the adenine at position 37 in tRNAs that read codons beginning with uridine, leading to the formation of N6-(dimethylallyl)adenosine (i(6)A). This chain is tRNA dimethylallyltransferase, found in Halorhodospira halophila (strain DSM 244 / SL1) (Ectothiorhodospira halophila (strain DSM 244 / SL1)).